A 142-amino-acid polypeptide reads, in one-letter code: Large ribosomal subunit protein uL11 (142 aa).

It belongs to the universal ribosomal protein uL11 family. In terms of assembly, part of the ribosomal stalk of the 50S ribosomal subunit. Interacts with L10 and the large rRNA to form the base of the stalk. L10 forms an elongated spine to which L12 dimers bind in a sequential fashion forming a multimeric L10(L12)X complex. One or more lysine residues are methylated.

In terms of biological role, forms part of the ribosomal stalk which helps the ribosome interact with GTP-bound translation factors. In Hahella chejuensis (strain KCTC 2396), this protein is Large ribosomal subunit protein uL11.